The primary structure comprises 183 residues: Peptide methionine sulfoxide reductase MsrA 1 (183 aa).

Cysteine 12 is an active-site residue.

It belongs to the MsrA Met sulfoxide reductase family.

It carries out the reaction L-methionyl-[protein] + [thioredoxin]-disulfide + H2O = L-methionyl-(S)-S-oxide-[protein] + [thioredoxin]-dithiol. It catalyses the reaction [thioredoxin]-disulfide + L-methionine + H2O = L-methionine (S)-S-oxide + [thioredoxin]-dithiol. Has an important function as a repair enzyme for proteins that have been inactivated by oxidation. Catalyzes the reversible oxidation-reduction of methionine sulfoxide in proteins to methionine. This chain is Peptide methionine sulfoxide reductase MsrA 1 (msrA1), found in Lactococcus lactis subsp. lactis (strain IL1403) (Streptococcus lactis).